The primary structure comprises 425 residues: Serine--tRNA ligase (425 aa).

Residue 229–231 (TSE) coordinates L-serine. ATP is bound by residues 259-261 (RKE) and valine 275. Glutamate 282 lines the L-serine pocket. Residue 349–352 (EVTS) coordinates ATP. Residue threonine 384 coordinates L-serine.

This sequence belongs to the class-II aminoacyl-tRNA synthetase family. Type-1 seryl-tRNA synthetase subfamily. In terms of assembly, homodimer. The tRNA molecule binds across the dimer.

The protein localises to the cytoplasm. It carries out the reaction tRNA(Ser) + L-serine + ATP = L-seryl-tRNA(Ser) + AMP + diphosphate + H(+). The enzyme catalyses tRNA(Sec) + L-serine + ATP = L-seryl-tRNA(Sec) + AMP + diphosphate + H(+). It participates in aminoacyl-tRNA biosynthesis; selenocysteinyl-tRNA(Sec) biosynthesis; L-seryl-tRNA(Sec) from L-serine and tRNA(Sec): step 1/1. Catalyzes the attachment of serine to tRNA(Ser). Is also able to aminoacylate tRNA(Sec) with serine, to form the misacylated tRNA L-seryl-tRNA(Sec), which will be further converted into selenocysteinyl-tRNA(Sec). The chain is Serine--tRNA ligase from Borrelia garinii subsp. bavariensis (strain ATCC BAA-2496 / DSM 23469 / PBi) (Borreliella bavariensis).